The sequence spans 189 residues: Glucose-6-phosphate isomerase (189 aa).

The Fe cation site is built by His88, His90, Glu97, and His136.

This sequence belongs to the archaeal-type GPI family. Homodimer. It depends on Fe cation as a cofactor.

The protein localises to the cytoplasm. It carries out the reaction alpha-D-glucose 6-phosphate = beta-D-fructose 6-phosphate. Its pathway is carbohydrate degradation; glycolysis; D-glyceraldehyde 3-phosphate and glycerone phosphate from D-glucose: step 2/4. This is Glucose-6-phosphate isomerase (pgiA) from Pyrococcus horikoshii (strain ATCC 700860 / DSM 12428 / JCM 9974 / NBRC 100139 / OT-3).